A 520-amino-acid polypeptide reads, in one-letter code: TnpB-like protein L79 (520 aa).

Over residues 21–47 the composition is skewed to basic residues; it reads GSKTKKKVFVKKKPPDKKPLKKPVKKT. Residues 21-52 form a disordered region; it reads GSKTKKKVFVKKKPPDKKPLKKPVKKTVKTDK. Positions 474, 477, 491, and 494 each coordinate Zn(2+).

It in the central section; belongs to the transposase 2 family. In the C-terminal section; belongs to the transposase 35 family.

This chain is TnpB-like protein L79, found in Acanthamoeba polyphaga mimivirus (APMV).